A 453-amino-acid polypeptide reads, in one-letter code: Na(+)/H(+) antiporter NhaA 2 (453 aa).

A run of 12 helical transmembrane segments spans residues 23–43, 74–94, 111–131, 139–159, 168–188, 191–211, 214–234, 235–255, 316–336, 345–365, 386–406, and 419–439; these read FLHI…AALI, LHFW…GMEI, LPMA…LSFG, GWAV…ALLG, VFLL…IAFF, GGLD…VIGL, IGVG…LGIL, LTGA…PVTA, VAFG…LSGV, WVMI…IVSV, IMLV…IANL, and LGVL…GVWS.

Belongs to the NhaA Na(+)/H(+) (TC 2.A.33) antiporter family.

The protein localises to the cell inner membrane. It catalyses the reaction Na(+)(in) + 2 H(+)(out) = Na(+)(out) + 2 H(+)(in). Functionally, na(+)/H(+) antiporter that extrudes sodium in exchange for external protons. This chain is Na(+)/H(+) antiporter NhaA 2, found in Pseudomonas putida (strain ATCC 47054 / DSM 6125 / CFBP 8728 / NCIMB 11950 / KT2440).